The following is a 171-amino-acid chain: Peptidyl-prolyl cis-trans isomerase slr1251 (171 aa).

Residues 6–169 (FFDITIGSDT…QAIVISDCGE (164 aa)) form the PPIase cyclophilin-type domain.

Belongs to the cyclophilin-type PPIase family.

It catalyses the reaction [protein]-peptidylproline (omega=180) = [protein]-peptidylproline (omega=0). PPIases accelerate the folding of proteins. It catalyzes the cis-trans isomerization of proline imidic peptide bonds in oligopeptides. This Synechocystis sp. (strain ATCC 27184 / PCC 6803 / Kazusa) protein is Peptidyl-prolyl cis-trans isomerase slr1251.